The following is a 497-amino-acid chain: Trichoplein keratin filament-binding protein (497 aa).

Coiled coils occupy residues 67 to 140, 166 to 271, and 327 to 479; these read HCEK…LLYE, ATQK…ELGR, and MKQV…AKTM. The interval 72 to 457 is interaction with keratin proteins; the sequence is KEEKRKILEL…WEAARQEEEE (386 aa). A disordered region spans residues 167 to 188; the sequence is TQKEEKKQQEATEKQENKRLEN. A compositionally biased stretch (basic and acidic residues) spans 168 to 188; sequence QKEEKKQQEATEKQENKRLEN. A trichohyalin/plectin homology domain region spans residues 258–424; sequence RQMAALRRKT…KQLAQRAKEE (167 aa). Positions 441 to 497 are disordered; it reads AERQGQEWEAARQEEEEEEEARQAEEHSNALLQQEAKTMAEKGYQPKLHGHLRIAWD. The segment covering 444–453 has biased composition (basic and acidic residues); sequence QGQEWEAARQ. Basic residues predominate over residues 488–497; it reads LHGHLRIAWD.

It belongs to the TCHP family. Interacts specifically with keratin proteins including, KRT5, KRT6A, KRT8, KRT14, KRT16 and KRT18. Interacts with KCTD17. In terms of processing, ubiquitinated. Ubiquitination by the BCR(KCTD17) E3 ubiquitin ligase complex results in proteasomal degradation, and induces ciliogenesis. As to expression, expressed in all tissues examined, including brain, liver, small intestine, large intestine, lung and heart. Found concentrated in tubular structures within hepatocytes, and in the apical cortical region and desmosomes of the apical junctional domain in enterocytes of the small intestine. In the hair follicle, localized at the outer root sheath. Also expressed in blood vessels (at protein level).

The protein resides in the cytoplasm. It is found in the cytoskeleton. Its subcellular location is the cell membrane. The protein localises to the mitochondrion. It localises to the microtubule organizing center. The protein resides in the centrosome. Tumor suppressor which has the ability to inhibit cell growth and be pro-apoptotic during cell stress. May act as a 'capping' or 'branching' protein for keratin filaments in the cell periphery. May regulate K8/K18 filament and desmosome organization mainly at the apical or peripheral regions of simple epithelial cells. Is a negative regulator of ciliogenesis. The polypeptide is Trichoplein keratin filament-binding protein (Mus musculus (Mouse)).